A 72-amino-acid chain; its full sequence is Translation initiation factor IF-1 (72 aa).

The S1-like domain maps to 1 to 72 (MAKEESIKMN…SKGRITYRAR (72 aa)).

Belongs to the IF-1 family. Component of the 30S ribosomal translation pre-initiation complex which assembles on the 30S ribosome in the order IF-2 and IF-3, IF-1 and N-formylmethionyl-tRNA(fMet); mRNA recruitment can occur at any time during PIC assembly.

It localises to the cytoplasm. Functionally, one of the essential components for the initiation of protein synthesis. Stabilizes the binding of IF-2 and IF-3 on the 30S subunit to which N-formylmethionyl-tRNA(fMet) subsequently binds. Helps modulate mRNA selection, yielding the 30S pre-initiation complex (PIC). Upon addition of the 50S ribosomal subunit IF-1, IF-2 and IF-3 are released leaving the mature 70S translation initiation complex. This chain is Translation initiation factor IF-1, found in Alkalilimnicola ehrlichii (strain ATCC BAA-1101 / DSM 17681 / MLHE-1).